A 34-amino-acid chain; its full sequence is Photosystem I reaction center subunit XII (34 aa).

Residues 10–32 (VFVALVVAAHAAVLALRLSISLY) form a helical membrane-spanning segment.

The protein belongs to the PsaM family.

The protein resides in the cellular thylakoid membrane. This is Photosystem I reaction center subunit XII from Parasynechococcus marenigrum (strain WH8102).